Reading from the N-terminus, the 345-residue chain is Dihydroorotase (345 aa).

The Zn(2+) site is built by His-13 and His-15. Substrate is bound by residues 15–17 and Asn-41; that span reads HFR. Zn(2+) is bound by residues Lys-98, His-135, and His-173. At Lys-98 the chain carries N6-carboxylysine. His-135 contributes to the substrate binding site. Leu-218 contacts substrate. Asp-246 contacts Zn(2+). The active site involves Asp-246. Substrate is bound by residues His-250 and Ala-262.

It belongs to the metallo-dependent hydrolases superfamily. DHOase family. Class II DHOase subfamily. As to quaternary structure, homodimer. The cofactor is Zn(2+).

It carries out the reaction (S)-dihydroorotate + H2O = N-carbamoyl-L-aspartate + H(+). It participates in pyrimidine metabolism; UMP biosynthesis via de novo pathway; (S)-dihydroorotate from bicarbonate: step 3/3. Its function is as follows. Catalyzes the reversible cyclization of carbamoyl aspartate to dihydroorotate. In Shewanella pealeana (strain ATCC 700345 / ANG-SQ1), this protein is Dihydroorotase.